The chain runs to 499 residues: Probable cytochrome P450 cyp-35D1 (499 aa).

Residue Cys444 participates in heme binding.

Belongs to the cytochrome P450 family. The cofactor is heme. In terms of tissue distribution, expressed in hypodermis, intestine and vulva upon thiabendazole (TBZ) exposure.

In terms of biological role, cytochromes P450 are a group of heme-thiolate monooxygenases. They oxidize a variety of structurally unrelated compounds, including steroids, fatty acids, and xenobiotics. Involved in the oxidative metabolism of thiabendazole (TBZ). Catalyzes the conversion of TBZ to its hydroxylated form. The protein is Probable cytochrome P450 cyp-35D1 of Caenorhabditis elegans.